The following is a 338-amino-acid chain: Tetraacyldisaccharide 4'-kinase (338 aa).

66-73 serves as a coordination point for ATP; that stretch reads IAGGAGKT.

This sequence belongs to the LpxK family.

The enzyme catalyses a lipid A disaccharide + ATP = a lipid IVA + ADP + H(+). The protein operates within glycolipid biosynthesis; lipid IV(A) biosynthesis; lipid IV(A) from (3R)-3-hydroxytetradecanoyl-[acyl-carrier-protein] and UDP-N-acetyl-alpha-D-glucosamine: step 6/6. Functionally, transfers the gamma-phosphate of ATP to the 4'-position of a tetraacyldisaccharide 1-phosphate intermediate (termed DS-1-P) to form tetraacyldisaccharide 1,4'-bis-phosphate (lipid IVA). This Delftia acidovorans (strain DSM 14801 / SPH-1) protein is Tetraacyldisaccharide 4'-kinase.